The sequence spans 219 residues: Transmembrane protein 17A (219 aa).

Asn-18 and Asn-27 each carry an N-linked (GlcNAc...) asparagine glycan. A run of 4 helical transmembrane segments spans residues 56 to 76, 83 to 103, 121 to 141, and 153 to 173; these read MMLYFNMFFFPFWWISELLML, LPVYYQCLLVTGMVLISIFEV, LAGFWLISFLFQLPILLFFIT, and AVHSLYLAFLLGELMASFLAL.

Belongs to the TMEM17 family. As to quaternary structure, part of the tectonic-like complex (also named B9 complex).

The protein localises to the cell projection. It is found in the cilium membrane. Its function is as follows. Transmembrane component of the tectonic-like complex, a complex localized at the transition zone of primary cilia and acting as a barrier that prevents diffusion of transmembrane proteins between the cilia and plasma membranes. Required for ciliogenesis and sonic hedgehog/SHH signaling. This is Transmembrane protein 17A (tmem17a) from Danio rerio (Zebrafish).